We begin with the raw amino-acid sequence, 209 residues long: Probable phosphatase C1687.21 (209 aa).

The active-site Tele-phosphohistidine intermediate is His8. Glu82 functions as the Proton donor/acceptor in the catalytic mechanism.

The protein belongs to the phosphoglycerate mutase family. BPG-dependent PGAM subfamily.

It localises to the cytoplasm. The protein resides in the nucleus. The chain is Probable phosphatase C1687.21 from Schizosaccharomyces pombe (strain 972 / ATCC 24843) (Fission yeast).